Here is a 208-residue protein sequence, read N- to C-terminus: MQSFKICFFISCLSVVLVKGQFGGTVSSNPNGGLDVNARLSKTIGDPNANVVGGVFAAGNTDGGPATRGAFLAANKDGHGLSLQHSKTDNFGSSLTSSAHAHLFNDKTHKLDANAFHSRTHLDNGFKFDRVGGGLRYDHVTGHGASLTASRIPQLDMNTLGLTGKANLWSSPNRATTLDLTGGVSKHFGGPFDGQTNKQIGLGLNSRF.

Residues 1 to 20 form the signal peptide; that stretch reads MQSFKICFFISCLSVVLVKG. Residues 21 to 47 constitute a propeptide that is removed on maturation; that stretch reads QFGGTVSSNPNGGLDVNARLSKTIGDP.

Hemolymph and fat body.

It is found in the secreted. In terms of biological role, hemolymph antibacterial protein against Gram-negative bacteria. This is Attacin-A from Glossina morsitans morsitans (Savannah tsetse fly).